An 866-amino-acid polypeptide reads, in one-letter code: FHIP family protein v1g243165 (866 aa).

2 disordered regions span residues 739–761 (RDGPPPSLMRAHSIGSIGSASTS) and 781–814 (GSTADISEDASPVSQAPETTGRPRASAVVRESQT). The segment covering 751 to 761 (SIGSIGSASTS) has biased composition (low complexity).

It belongs to the FHIP family.

The protein is FHIP family protein v1g243165 of Nematostella vectensis (Starlet sea anemone).